The primary structure comprises 164 residues: S-ribosylhomocysteine lyase (164 aa).

Fe cation contacts are provided by histidine 54, histidine 58, and cysteine 128.

The protein belongs to the LuxS family. As to quaternary structure, homodimer. The cofactor is Fe cation.

It catalyses the reaction S-(5-deoxy-D-ribos-5-yl)-L-homocysteine = (S)-4,5-dihydroxypentane-2,3-dione + L-homocysteine. Involved in the synthesis of autoinducer 2 (AI-2) which is secreted by bacteria and is used to communicate both the cell density and the metabolic potential of the environment. The regulation of gene expression in response to changes in cell density is called quorum sensing. Catalyzes the transformation of S-ribosylhomocysteine (RHC) to homocysteine (HC) and 4,5-dihydroxy-2,3-pentadione (DPD). This Campylobacter jejuni subsp. jejuni serotype O:2 (strain ATCC 700819 / NCTC 11168) protein is S-ribosylhomocysteine lyase.